We begin with the raw amino-acid sequence, 325 residues long: Thiamine-monophosphate kinase (325 aa).

Mg(2+)-binding residues include aspartate 30, serine 45, threonine 46, and aspartate 47. Histidine 54 is a substrate binding site. Mg(2+)-binding residues include aspartate 75 and aspartate 122. ATP-binding positions include 121-122 and arginine 146; that span reads GD. Aspartate 212 contributes to the Mg(2+) binding site. Serine 214 is an ATP binding site. Mg(2+) is bound at residue aspartate 215. Residues glutamate 263 and tyrosine 319 each contribute to the substrate site.

This sequence belongs to the thiamine-monophosphate kinase family.

It catalyses the reaction thiamine phosphate + ATP = thiamine diphosphate + ADP. Its pathway is cofactor biosynthesis; thiamine diphosphate biosynthesis; thiamine diphosphate from thiamine phosphate: step 1/1. Its function is as follows. Catalyzes the ATP-dependent phosphorylation of thiamine-monophosphate (TMP) to form thiamine-pyrophosphate (TPP), the active form of vitamin B1. This chain is Thiamine-monophosphate kinase, found in Escherichia coli O157:H7.